Consider the following 441-residue polypeptide: RNA-binding protein BRN1 (441 aa).

RRM domains lie at 18–99 (VKLF…YADG) and 106–186 (HKLF…WADT). Residues 258–273 (QPNQGNNNALQGTSPD) show a composition bias toward polar residues. The segment at 258–282 (QPNQGNNNALQGTSPDSVPPRLARR) is disordered. The 79-residue stretch at 349–427 (ANLFIYNIPR…KKLKVQLKRD (79 aa)) folds into the RRM 3 domain.

As to expression, highly expressed in stems and cauline leaves, and at lower levels in siliques, flowers, roots and rosette leaves.

It is found in the cytoplasm. RNA-binding protein involved in the regulation of flowering time. Acts as a repressor of the activity of SOC1, a transcriptional activator of flowering time. Binds to the 3'-UTR of SOC1 mRNA in the cytoplasm and participates in SOC1 mRNA decay, mediated by the distal region of the SOC1 3'-UTR. Acts as a positive regulator of salicylic acid (SA)-mediated immunity. May act on SA signaling-related genes at a post-transcriptional level. In Arabidopsis thaliana (Mouse-ear cress), this protein is RNA-binding protein BRN1.